We begin with the raw amino-acid sequence, 448 residues long: Trigger factor (448 aa).

A PPIase FKBP-type domain is found at 172–257 (GDRVTVDFVG…MKKIEWPHLP (86 aa)).

This sequence belongs to the FKBP-type PPIase family. Tig subfamily.

The protein resides in the cytoplasm. It carries out the reaction [protein]-peptidylproline (omega=180) = [protein]-peptidylproline (omega=0). Its function is as follows. Involved in protein export. Acts as a chaperone by maintaining the newly synthesized protein in an open conformation. Functions as a peptidyl-prolyl cis-trans isomerase. This chain is Trigger factor, found in Burkholderia lata (strain ATCC 17760 / DSM 23089 / LMG 22485 / NCIMB 9086 / R18194 / 383).